Here is a 116-residue protein sequence, read N- to C-terminus: MRHQRRVPQLGRPADQRKALLRALTTELIRHGRITTTKARAKAVRAEAERMITLAKDGSLAARRRALGYLYDKQLVHSLFAQAPERYGDRQGGYTRIIRSVRRRGDNAELAVIELV.

The protein belongs to the bacterial ribosomal protein bL17 family. Part of the 50S ribosomal subunit. Contacts protein L32.

This chain is Large ribosomal subunit protein bL17, found in Thermosynechococcus vestitus (strain NIES-2133 / IAM M-273 / BP-1).